Reading from the N-terminus, the 335-residue chain is Cobalt-precorrin-5B C(1)-methyltransferase (335 aa).

It belongs to the CbiD family.

It carries out the reaction Co-precorrin-5B + S-adenosyl-L-methionine = Co-precorrin-6A + S-adenosyl-L-homocysteine. It participates in cofactor biosynthesis; adenosylcobalamin biosynthesis; cob(II)yrinate a,c-diamide from sirohydrochlorin (anaerobic route): step 6/10. Its function is as follows. Catalyzes the methylation of C-1 in cobalt-precorrin-5B to form cobalt-precorrin-6A. In Methanospirillum hungatei JF-1 (strain ATCC 27890 / DSM 864 / NBRC 100397 / JF-1), this protein is Cobalt-precorrin-5B C(1)-methyltransferase.